The primary structure comprises 236 residues: Dolichol-phosphate mannosyltransferase (236 aa).

Positions 9, 11, 13, 40, 42, 95, 96, 97, 124, 160, 211, and 217 each coordinate GDP-alpha-D-mannose. Aspartate 97 is a Mg(2+) binding site. Aspartate 97 contacts Mn(2+).

Belongs to the glycosyltransferase 2 family. In terms of assembly, component of the dolichol-phosphate mannose (DPM) synthase complex composed of dpm1, dpm2 and dpm3. It depends on Mg(2+) as a cofactor. Mn(2+) serves as cofactor. The cofactor is Ca(2+).

It localises to the endoplasmic reticulum. The enzyme catalyses a di-trans,poly-cis-dolichyl phosphate + GDP-alpha-D-mannose = a di-trans,poly-cis-dolichyl beta-D-mannosyl phosphate + GDP. Its pathway is protein modification; protein glycosylation. Functionally, transfers mannose from GDP-mannose to dolichol monophosphate to form dolichol phosphate mannose (Dol-P-Man) which is the mannosyl donor in pathways leading to N-glycosylation, glycosyl phosphatidylinositol membrane anchoring, and O-mannosylation of proteins. In Schizosaccharomyces pombe (strain 972 / ATCC 24843) (Fission yeast), this protein is Dolichol-phosphate mannosyltransferase.